A 119-amino-acid polypeptide reads, in one-letter code: Immunoglobulin heavy variable 2-5 (119 aa).

A signal peptide spans 1–19 (MDTLCSTLLLLTIPSWVLS). Gln-20 carries the pyrrolidone carboxylic acid modification. A framework-1 region spans residues 20–44 (QITLKESGPTLVKPTQTLTLTCTFS). In terms of domain architecture, Ig-like spans 20–119 (QITLKESGPT…DTATYYCAHR (100 aa)). Cys-41 and Cys-116 are disulfide-bonded. A complementarity-determining-1 region spans residues 45-54 (GFSLSTSGVG). The segment at 55 to 71 (VGWIRQPPGKALEWLAL) is framework-2. A complementarity-determining-2 region spans residues 72 to 78 (IYWDDDK). The framework-3 stretch occupies residues 79–116 (RYSPSLKSRLTITKDTSKNQVVLTMTNMDPVDTATYYC). Residues 117–119 (AHR) are complementarity-determining-3.

As to quaternary structure, immunoglobulins are composed of two identical heavy chains and two identical light chains; disulfide-linked.

Its subcellular location is the secreted. It localises to the cell membrane. Its function is as follows. V region of the variable domain of immunoglobulin heavy chains that participates in the antigen recognition. Immunoglobulins, also known as antibodies, are membrane-bound or secreted glycoproteins produced by B lymphocytes. In the recognition phase of humoral immunity, the membrane-bound immunoglobulins serve as receptors which, upon binding of a specific antigen, trigger the clonal expansion and differentiation of B lymphocytes into immunoglobulins-secreting plasma cells. Secreted immunoglobulins mediate the effector phase of humoral immunity, which results in the elimination of bound antigens. The antigen binding site is formed by the variable domain of one heavy chain, together with that of its associated light chain. Thus, each immunoglobulin has two antigen binding sites with remarkable affinity for a particular antigen. The variable domains are assembled by a process called V-(D)-J rearrangement and can then be subjected to somatic hypermutations which, after exposure to antigen and selection, allow affinity maturation for a particular antigen. This Homo sapiens (Human) protein is Immunoglobulin heavy variable 2-5.